A 374-amino-acid chain; its full sequence is Lipoyl synthase, mitochondrial (374 aa).

Residues Cys101, Cys106, Cys112, Cys132, Cys136, Cys139, and Ser347 each coordinate [4Fe-4S] cluster. A Radical SAM core domain is found at 117–336; that stretch reads ENGTQTATIM…EERGNDLGFL (220 aa).

It belongs to the radical SAM superfamily. Lipoyl synthase family. [4Fe-4S] cluster serves as cofactor.

Its subcellular location is the mitochondrion. The enzyme catalyses [[Fe-S] cluster scaffold protein carrying a second [4Fe-4S](2+) cluster] + N(6)-octanoyl-L-lysyl-[protein] + 2 oxidized [2Fe-2S]-[ferredoxin] + 2 S-adenosyl-L-methionine + 4 H(+) = [[Fe-S] cluster scaffold protein] + N(6)-[(R)-dihydrolipoyl]-L-lysyl-[protein] + 4 Fe(3+) + 2 hydrogen sulfide + 2 5'-deoxyadenosine + 2 L-methionine + 2 reduced [2Fe-2S]-[ferredoxin]. Its pathway is protein modification; protein lipoylation via endogenous pathway; protein N(6)-(lipoyl)lysine from octanoyl-[acyl-carrier-protein]: step 2/2. In terms of biological role, catalyzes the radical-mediated insertion of two sulfur atoms into the C-6 and C-8 positions of the octanoyl moiety bound to the lipoyl domains of lipoate-dependent enzymes, thereby converting the octanoylated domains into lipoylated derivatives. The polypeptide is Lipoyl synthase, mitochondrial (Drosophila pseudoobscura pseudoobscura (Fruit fly)).